A 424-amino-acid polypeptide reads, in one-letter code: UDP-N-acetylglucosamine 1-carboxyvinyltransferase (424 aa).

Position 22–23 (22–23) interacts with phosphoenolpyruvate; the sequence is KN. Arg98 serves as a coordination point for UDP-N-acetyl-alpha-D-glucosamine. Residue Cys122 is the Proton donor of the active site. Residue Cys122 is modified to 2-(S-cysteinyl)pyruvic acid O-phosphothioketal. Residues 127–131, Asp312, and Ile334 contribute to the UDP-N-acetyl-alpha-D-glucosamine site; that span reads RPVDQ.

This sequence belongs to the EPSP synthase family. MurA subfamily.

The protein resides in the cytoplasm. The catalysed reaction is phosphoenolpyruvate + UDP-N-acetyl-alpha-D-glucosamine = UDP-N-acetyl-3-O-(1-carboxyvinyl)-alpha-D-glucosamine + phosphate. It functions in the pathway cell wall biogenesis; peptidoglycan biosynthesis. Its function is as follows. Cell wall formation. Adds enolpyruvyl to UDP-N-acetylglucosamine. The chain is UDP-N-acetylglucosamine 1-carboxyvinyltransferase from Xanthomonas euvesicatoria pv. vesicatoria (strain 85-10) (Xanthomonas campestris pv. vesicatoria).